We begin with the raw amino-acid sequence, 2052 residues long: Genome polyprotein (2052 aa).

2 consecutive short sequence motifs ((L)YPX(n)L motif) follow at residues 167–171 (YPHGL) and 200–205 (YPVWEL). The tract at residues 502-522 (TVSTEQNVPDPQVGIKGKANR) is disordered. The interval 760–830 (MMSRIAAGDL…PRKMKGLFSQ (71 aa)) is involved in P1-2A pentamerization. A helical membrane pass occupies residues 1005–1025 (TVEIINIVLCFIKSGILLYVI). The interval 1037–1064 (IGLLRVMNYADIGCSVISCGKVFSKMLE) is membrane-penetrating ability. The stretch at 1121–1146 (KKKDVLNILKDNQQKIEKAIEEADNF) forms a coiled coil. A helical transmembrane segment spans residues 1296–1316 (WVAVGAAVGILGLLVGGWFVY). O-(5'-phospho-RNA)-tyrosine is present on Tyr-1333. Positions 1348–1562 (DPVESQSTLE…VAKLITQEMF (215 aa)) constitute a Peptidase C3 domain. Catalysis depends on for protease 3C activity residues His-1397, Asp-1437, and Cys-1525. The region spanning 1810-1931 (DVGLDLDFSA…VFSRDVQIDN (122 aa)) is the RdRp catalytic domain.

It belongs to the picornaviridae polyprotein family. In terms of assembly, homodimer. Homomultimer; probably interacts with membranes in a multimeric form. Seems to assemble into amyloid-like fibers. Homodimer. Monomer. Interacts with protein 3CD. As to quaternary structure, interacts with host ACBD3. In terms of assembly, interacts with protein 3AB. Interacts with human MAVS. As to quaternary structure, homodimer; disulfide-linked. In terms of assembly, homopentamer. Homooligomer. Interacts with capsid protein VP2. Interacts with capsid protein VP3. As to quaternary structure, interacts with capsid protein VP1. Interacts with capsid protein VP3. In terms of assembly, interacts with capsid protein VP1. Interacts with capsid protein VP2. Specific enzymatic cleavages by viral protease in vivo yield a variety of precursors and mature proteins. Polyprotein processing intermediates are produced, such as P1-2A which is a functional precursor of the structural proteins, VP0 which is a VP4-VP2 precursor, VP1-2A precursor, 3ABC precursor which is a stable and catalytically active precursor of 3A, 3B and 3C proteins, 3AB and 3CD precursors. The assembly signal 2A is removed from VP1-2A by a host protease, possibly host Cathepsin L. This cleavage occurs over a region of 3 amino-acids probably generating VP1 proteins with heterogeneous C-termini. Post-translationally, during virion maturation, immature virions are rendered infectious following cleavage of VP0 into VP4 and VP2. This maturation seems to be an autocatalytic event triggered by the presence of RNA in the capsid and is followed by a conformational change of the particle. In terms of processing, the assembly signal 2A is removed from VP1-2A by a host protease, possibly host Cathepsin L in naked virions. This cleavage does not occur in enveloped virions. This cleavage occurs over a region of 3 amino-acids probably generating VP1 proteins with heterogeneous C-termini. VPg is uridylylated prior to priming replication into VPg-pUpU. Post-translationally, unlike other picornaviruses, does not seem to be myristoylated.

The protein resides in the virion. Its subcellular location is the host endosome. The protein localises to the host multivesicular body. It is found in the host membrane. It localises to the host mitochondrion outer membrane. The protein resides in the host cytoplasm. Its subcellular location is the host cytoplasmic vesicle membrane. The enzyme catalyses RNA(n) + a ribonucleoside 5'-triphosphate = RNA(n+1) + diphosphate. It carries out the reaction a ribonucleoside 5'-triphosphate + H2O = a ribonucleoside 5'-diphosphate + phosphate + H(+). The catalysed reaction is Selective cleavage of Gln-|-Gly bond in the poliovirus polyprotein. In other picornavirus reactions Glu may be substituted for Gln, and Ser or Thr for Gly.. Capsid proteins VP1, VP2, and VP3 form a closed capsid enclosing the viral positive strand RNA genome. All these proteins contain a beta-sheet structure called beta-barrel jelly roll. Together they form an icosahedral capsid (T=3) composed of 60 copies of each VP1, VP2, and VP3, with a diameter of approximately 300 Angstroms. VP1 is situated at the 12 fivefold axes, whereas VP2 and VP3 are located at the quasi-sixfold axes. The naked capsid interacts with the host receptor HAVCR1 to provide virion attachment to and probably entry into the target cell. Its function is as follows. VP0 precursor is a component of the immature procapsids. In terms of biological role, plays a role in the assembly of the 12 pentamers into an icosahedral structure. Has not been detected in mature virions, supposedly owing to its small size. Functionally, precursor component of immature procapsids that corresponds to an extended form of the structural protein VP1. After maturation, possibly by the host Cathepsin L, the assembly signal 2A is cleaved to give rise to the mature VP1 protein. Functions as a viroporin. Affects membrane integrity and causes an increase in membrane permeability. Involved in host intracellular membrane rearrangements probably to give rise to the viral factories. Does not disrupt calcium homeostasis or glycoprotein trafficking. Antagonizes the innate immune response of the host by suppressing IFN-beta synthesis, which it achieves by interfering with the RIG-I/IFIH1 pathway. Its function is as follows. Affects membrane integrity and causes an increase in membrane permeability. In terms of biological role, associates with and induces structural rearrangements of intracellular membranes. Displays RNA-binding activity. Functionally, the precursor 3ABC is targeted to the mitochondrial membrane where protease 3C activity cleaves and inhibits the host antiviral protein MAVS, thereby disrupting activation of IRF3 through the IFIH1/MDA5 pathway. In vivo, the protease activity of 3ABC precursor is more efficient in cleaving the 2BC precursor than that of protein 3C. The 3ABC precursor may therefore play a role in the proteolytic processing of the polyprotein. Possible viroporin. Interacts with the 3CD precursor and with RNA structures found at both the 5'- and 3'-termini of the viral genome. Since the 3AB precursor contains the hydrophobic domain 3A, it probably anchors the whole viral replicase complex to intracellular membranes on which viral RNA synthesis occurs. Its function is as follows. May serve as membrane anchor to the 3AB and 3ABC precursors via its hydrophobic domain. May interact with RNA. In terms of biological role, acts as a primer for viral RNA replication and remains covalently bound to viral genomic RNA. VPg is uridylylated prior to priming replication into VPg-pUpU. The VPg-pUpU is then used as primer on the genomic RNA poly(A) by the RNA-dependent RNA polymerase to replicate the viral genome. Functionally, cysteine protease that generates mature viral proteins from the precursor polyprotein. In addition to its proteolytic activity, it binds to viral RNA, and thus influences viral genome replication. RNA and substrate bind cooperatively to the protease. Cleaves IKBKG/NEMO to impair innate immune signaling. Cleaves host PABPC1 which may participate in the switch of viral translation to RNA synthesis. Interacts with the 3AB precursor and with RNA structures found at both the 5'- and 3'-termini of the viral genome. Disrupts TLR3 signaling by degrading the host adapter protein TICAM1/TRIF. Its function is as follows. RNA-directed RNA polymerase 3D-POL replicates genomic and antigenomic RNA by recognizing replications specific signals. The protein is Genome polyprotein of Homo sapiens (Human).